A 392-amino-acid chain; its full sequence is Glutamate 5-kinase (392 aa).

K17 serves as a coordination point for ATP. Substrate is bound by residues S57, D144, and N156. An ATP-binding site is contributed by 176 to 177 (SD). In terms of domain architecture, PUA spans 282 to 359 (AGILSVDAGA…AEIEALLGYA (78 aa)). The disordered stretch occupies residues 373–392 (TEQTGRKAGKSTKKKDEAHA).

This sequence belongs to the glutamate 5-kinase family.

Its subcellular location is the cytoplasm. It catalyses the reaction L-glutamate + ATP = L-glutamyl 5-phosphate + ADP. Its pathway is amino-acid biosynthesis; L-proline biosynthesis; L-glutamate 5-semialdehyde from L-glutamate: step 1/2. Its function is as follows. Catalyzes the transfer of a phosphate group to glutamate to form L-glutamate 5-phosphate. The protein is Glutamate 5-kinase of Allorhizobium ampelinum (strain ATCC BAA-846 / DSM 112012 / S4) (Agrobacterium vitis (strain S4)).